A 307-amino-acid polypeptide reads, in one-letter code: MAAITASMVGELRAKTDAPMMECKKALTEADGNMEKAEELLRIKLGNKAGKASGRITAEGVVTAFVDGAAGGMIEINCETDFVTKNDSFLAMANAAAMLVAKHNPADIAALGALPYEQDGFGPTLEDVRKGLIGKIGENMSFRRFKHFAGNGKLASYLHGTRIGVMVEFEGDDTSAKDVAMHIAAMKPVAIQASDVPADLIEKERAVAAGKAEEDRKTAEAEGKKPQPAEIVAKRIEGGVQKYLKEVSLHNQPFVKNDKQTVEQMLKAANTSIKGFTLYVVGEGIEKKVDDFAAEVAAQVAAAKAAA.

Residues Thr80–Val83 are involved in Mg(2+) ion dislocation from EF-Tu.

This sequence belongs to the EF-Ts family.

The protein resides in the cytoplasm. Functionally, associates with the EF-Tu.GDP complex and induces the exchange of GDP to GTP. It remains bound to the aminoacyl-tRNA.EF-Tu.GTP complex up to the GTP hydrolysis stage on the ribosome. In Variovorax paradoxus (strain S110), this protein is Elongation factor Ts.